The primary structure comprises 494 residues: Pre-hexon-linking protein IIIa (494 aa).

Positions 1 to 101 (MAALSPTVRA…ALLQRVGRYN (101 aa)) are peripentonal hexon-tethering domain. The interval 132-245 (GSLVALNGFL…FTDSRTVNGD (114 aa)) is binding to hexon-linking protein. Threonine 268 is modified (phosphothreonine; by host). Serine 439 and serine 456 each carry phosphoserine; by host. A propeptide spanning residues 484–494 (TNPFKHLQPQF) is cleaved from the precursor.

It belongs to the adenoviridae hexon-linking protein IIIa family. In terms of assembly, interacts with hexon proteins; this interaction tethers the peripentonal hexons to hexons situated in the facet. Interacts with the penton protein (via N-terminus). Interacts with packaging protein 3; this interaction is required to promote correct genome packaging. Post-translationally, cleaved near the C-terminus by the viral protease during virion maturation to form the mature protein.

Its subcellular location is the virion. The protein localises to the host nucleus. In terms of biological role, structural component of the virion that acts as a cement protein on the capsid exterior which mediates the interactions between the hexons, including the peripentonal hexons, and reaches all the way to the penton vertices. Two hexon linking proteins IIIa, one from each facet, stabilize the unique edge interface between a pair of facets. As the virus enters the host cell, hexon linking proteins IIIa are shed concomitant with virion acidification in the endosome. During virus assembly, seems to play a role in the serotype specificity of the packaging of viral DNA via its interaction with packaging protein 3. This chain is Pre-hexon-linking protein IIIa, found in Murine adenovirus A serotype 1 (MAdV-1).